The sequence spans 529 residues: Neuronal acetylcholine receptor subunit alpha-2 (529 aa).

An N-terminal signal peptide occupies residues 1–26 (MGPSCPVFLSFTKLSLWWLLLTPAGG). The interval 27–56 (EEAKRPPPRAPGDPLSSPSPTALPQGGSHT) is disordered. The Extracellular segment spans residues 27–264 (EEAKRPPPRA…VTYAFIIRRL (238 aa)). 2 N-linked (GlcNAc...) asparagine glycosylation sites follow: Asn79 and Asn129. A disulfide bond links Cys183 and Cys197. A glycan (N-linked (GlcNAc...) asparagine) is linked at Asn235. Cysteines 247 and 248 form a disulfide. Transmembrane regions (helical) follow at residues 265–289 (PLFYTINLIIPCLLISCLTVLVFYL), 297–315 (ITLCISVLLSLTVFLLLIT), and 331–352 (YLLFTMIFVTLSIVITVFVLNV). Residues 353-502 (HHRSPSTHTM…WKYVAMVIDR (150 aa)) are Cytoplasmic-facing. A helical membrane pass occupies residues 503–521 (IFLWLFIIVCFLGTIGLFL).

Belongs to the ligand-gated ion channel (TC 1.A.9) family. Acetylcholine receptor (TC 1.A.9.1) subfamily. Alpha-2/CHRNA2 sub-subfamily. As to quaternary structure, neuronal AChR is composed of two different types of subunits: alpha and non-alpha (beta). CHRNA2/alpha-2 subunit can be combined to CHRNB2/beta-2 or CHRNB4/beta-4 to give rise to functional receptors. Both CHRNA2:CHRNB2 and CHRNA2:CHRNB4 nAChR complexes are heteropentamers with two subtypes: LS (low agonist sensitivity) with a (CHRNA2)3:(CHRNB2/4)2 and HS (high agonist sensitivity) with a (CHRNA2)2:(CHRNB2/4)3 stoichiometries; the subtypes differ in their subunit binding interfaces which are involved in ligand binding.

The protein resides in the synaptic cell membrane. The protein localises to the cell membrane. The catalysed reaction is Ca(2+)(in) = Ca(2+)(out). It catalyses the reaction K(+)(in) = K(+)(out). It carries out the reaction Na(+)(in) = Na(+)(out). In terms of biological role, component of neuronal acetylcholine receptors (nAChRs) that function as pentameric, ligand-gated cation channels with high calcium permeability among other activities. nAChRs are excitatory neurotrasnmitter receptors formed by a collection of nAChR subunits known to mediate synaptic transmission in the nervous system and the neuromuscular junction. Each nAchR subunit confers differential attributes to channel properties, including activation, deactivation and desensitization kinetics, pH sensitivity, cation permeability, and binding to allosteric modulators. CHRNA2 forms heteropentameric neuronal acetylcholine receptors with CHRNB2 and CHRNB4 and plays a role in nicotine dependence. This is Neuronal acetylcholine receptor subunit alpha-2 (CHRNA2) from Pan troglodytes (Chimpanzee).